The following is a 249-amino-acid chain: Type III pantothenate kinase (249 aa).

An ATP-binding site is contributed by 6–13 (DCGNSFIK). Residues Y93 and 100–103 (GMDR) each bind substrate. D102 functions as the Proton acceptor in the catalytic mechanism. D122 is a binding site for K(+). T125 serves as a coordination point for ATP. Residue T181 coordinates substrate.

This sequence belongs to the type III pantothenate kinase family. Homodimer. Requires NH4(+) as cofactor. K(+) serves as cofactor.

The protein resides in the cytoplasm. It catalyses the reaction (R)-pantothenate + ATP = (R)-4'-phosphopantothenate + ADP + H(+). The protein operates within cofactor biosynthesis; coenzyme A biosynthesis; CoA from (R)-pantothenate: step 1/5. Its function is as follows. Catalyzes the phosphorylation of pantothenate (Pan), the first step in CoA biosynthesis. The chain is Type III pantothenate kinase from Pseudomonas putida (strain ATCC 47054 / DSM 6125 / CFBP 8728 / NCIMB 11950 / KT2440).